The following is a 294-amino-acid chain: Proteasome subunit beta (294 aa).

Residues methionine 1 to glycine 65 constitute a propeptide, removed in mature form; by autocatalysis. Residue threonine 66 is the Nucleophile of the active site.

Belongs to the peptidase T1B family. In terms of assembly, the 20S proteasome core is composed of 14 alpha and 14 beta subunits that assemble into four stacked heptameric rings, resulting in a barrel-shaped structure. The two inner rings, each composed of seven catalytic beta subunits, are sandwiched by two outer rings, each composed of seven alpha subunits. The catalytic chamber with the active sites is on the inside of the barrel. Has a gated structure, the ends of the cylinder being occluded by the N-termini of the alpha-subunits. Is capped by the proteasome-associated ATPase, ARC.

It localises to the cytoplasm. It carries out the reaction Cleavage of peptide bonds with very broad specificity.. Its pathway is protein degradation; proteasomal Pup-dependent pathway. Its activity is regulated as follows. The formation of the proteasomal ATPase ARC-20S proteasome complex, likely via the docking of the C-termini of ARC into the intersubunit pockets in the alpha-rings, may trigger opening of the gate for substrate entry. Interconversion between the open-gate and close-gate conformations leads to a dynamic regulation of the 20S proteasome proteolysis activity. Component of the proteasome core, a large protease complex with broad specificity involved in protein degradation. In Rhodococcus jostii (strain RHA1), this protein is Proteasome subunit beta.